Reading from the N-terminus, the 616-residue chain is Probable Xaa-Pro aminopeptidase P (616 aa).

Aspartate 413, aspartate 424, glutamate 522, and glutamate 536 together coordinate Mn(2+).

Belongs to the peptidase M24B family. The cofactor is Mn(2+).

The catalysed reaction is Release of any N-terminal amino acid, including proline, that is linked to proline, even from a dipeptide or tripeptide.. Functionally, catalyzes the removal of a penultimate prolyl residue from the N-termini of peptides. This Paracoccidioides brasiliensis (strain Pb18) protein is Probable Xaa-Pro aminopeptidase P (AMPP).